We begin with the raw amino-acid sequence, 233 residues long: tRNA (guanine-N(7)-)-methyltransferase (233 aa).

The tract at residues 1–22 (MIDENHPMRAAGNFFGRRHGKP) is disordered. S-adenosyl-L-methionine-binding residues include E64, E89, D116, and D138. The active site involves D138. Substrate contacts are provided by residues K142, D174, and 212 to 215 (TRYE).

It belongs to the class I-like SAM-binding methyltransferase superfamily. TrmB family.

It carries out the reaction guanosine(46) in tRNA + S-adenosyl-L-methionine = N(7)-methylguanosine(46) in tRNA + S-adenosyl-L-homocysteine. The protein operates within tRNA modification; N(7)-methylguanine-tRNA biosynthesis. Catalyzes the formation of N(7)-methylguanine at position 46 (m7G46) in tRNA. This Brucella melitensis biotype 1 (strain ATCC 23456 / CCUG 17765 / NCTC 10094 / 16M) protein is tRNA (guanine-N(7)-)-methyltransferase.